A 321-amino-acid chain; its full sequence is MSIPADIASLISDKYKSAFDNGNLKFIQTETTKTKDPKTSMPYLISHMPSLIEKPERGQTPEGEDPLGKPEEELTVIPEFGGADNKAYKLLLNKFPVIPEHTLLVTNEYQHQTDALTPTDLLTAYKLLCALDNEESDKRHMVFYNSGPASGSSLDHKHLQILQMPEKFVTFQDRLCNGKEHFLPTFNTEPLQDAKVSFAHFVLPMPESEETVDEDLLAMCYISILQRALTFFQDWLNENPELKKSYNLMLTKEWICVVPRSKAFSDEMKIGFNSTGYCGMILTKNDEVFSKITEKPELINDILLECGFPNTSGQKPNEYNY.

The interval S50–P70 is disordered. Residue K54 coordinates substrate. T60 is modified (phosphothreonine). Residues N93–K94, N145, and G151–L154 each bind substrate. The active-site Nucleophile is the H158. Substrate-binding positions include Q160, N273–T275, M280, and K284.

The protein belongs to the ATP adenylyltransferase family. Monomer. It depends on a divalent metal cation as a cofactor. In terms of processing, the N-terminus is blocked.

It localises to the cytoplasm. The protein resides in the nucleus. It carries out the reaction ADP + ATP + H(+) = P(1),P(4)-bis(5'-adenosyl) tetraphosphate + phosphate. The enzyme catalyses sulfate + ADP + H(+) = adenosine 5'-phosphosulfate + phosphate. In terms of biological role, ap4A phosphorylase catalyzes the phosphorolytic degradation of bis(5'-adenosyl) tetraphosphate (Ap4A) into ADP and ATP. Can also use other Np4N' nucleotides (where N and N' stand for A,C,G or U) as substrates with equal efficiency. Cannot catalyze the reverse reaction. Additionally, this enzyme can also catalyze the phosphorolytic degradation of adenosine 5'-phosphosulfate (AMPS) into ADP and sulfate, the reversible exchange reaction between inorganic phosphate and the beta-phosphate of a nucleoside diphosphate (NDP), and the synthesis of Ap4A from AMPS plus ATP. This is Protein APA1 from Saccharomyces cerevisiae (strain ATCC 204508 / S288c) (Baker's yeast).